Consider the following 63-residue polypeptide: Small ribosomal subunit protein eS17 (63 aa).

Belongs to the eukaryotic ribosomal protein eS17 family.

This chain is Small ribosomal subunit protein eS17 (rps17e), found in Haloarcula marismortui (strain ATCC 43049 / DSM 3752 / JCM 8966 / VKM B-1809) (Halobacterium marismortui).